The primary structure comprises 327 residues: Tryptophan--tRNA ligase (327 aa).

ATP contacts are provided by residues 9-11 (QPS) and 17-18 (GN). Positions 10–18 (PSGTLTLGN) match the 'HIGH' region motif. Aspartate 132 provides a ligand contact to L-tryptophan. ATP contacts are provided by residues 144–146 (GDD), isoleucine 183, and 192–196 (KMSKS). The short motif at 192 to 196 (KMSKS) is the 'KMSKS' region element.

Belongs to the class-I aminoacyl-tRNA synthetase family. Homodimer.

Its subcellular location is the cytoplasm. The enzyme catalyses tRNA(Trp) + L-tryptophan + ATP = L-tryptophyl-tRNA(Trp) + AMP + diphosphate + H(+). Its function is as follows. Catalyzes the attachment of tryptophan to tRNA(Trp). The sequence is that of Tryptophan--tRNA ligase from Oceanobacillus iheyensis (strain DSM 14371 / CIP 107618 / JCM 11309 / KCTC 3954 / HTE831).